We begin with the raw amino-acid sequence, 367 residues long: tRNA/tmRNA (uracil-C(5))-methyltransferase (367 aa).

Glutamine 182, tyrosine 210, asparagine 215, glutamate 231, and aspartate 293 together coordinate S-adenosyl-L-methionine. Cysteine 318 functions as the Nucleophile in the catalytic mechanism. Glutamate 352 functions as the Proton acceptor in the catalytic mechanism.

Belongs to the class I-like SAM-binding methyltransferase superfamily. RNA M5U methyltransferase family. TrmA subfamily.

It catalyses the reaction uridine(54) in tRNA + S-adenosyl-L-methionine = 5-methyluridine(54) in tRNA + S-adenosyl-L-homocysteine + H(+). It carries out the reaction uridine(341) in tmRNA + S-adenosyl-L-methionine = 5-methyluridine(341) in tmRNA + S-adenosyl-L-homocysteine + H(+). Its function is as follows. Dual-specificity methyltransferase that catalyzes the formation of 5-methyluridine at position 54 (m5U54) in all tRNAs, and that of position 341 (m5U341) in tmRNA (transfer-mRNA). This Neisseria meningitidis serogroup C (strain 053442) protein is tRNA/tmRNA (uracil-C(5))-methyltransferase.